Consider the following 892-residue polypeptide: DNA mismatch repair protein MutS (892 aa).

607 to 614 (GPNMSGKS) is a binding site for ATP. Residues 826 to 854 (ETKAETEEESQLSFFGGEQSSKKQDKPVL) form a disordered region. Basic and acidic residues predominate over residues 845-854 (SSKKQDKPVL).

It belongs to the DNA mismatch repair MutS family.

This protein is involved in the repair of mismatches in DNA. It is possible that it carries out the mismatch recognition step. This protein has a weak ATPase activity. The polypeptide is DNA mismatch repair protein MutS (Bacillus cereus (strain AH187)).